The chain runs to 389 residues: Alkanesulfonate monooxygenase (389 aa).

Belongs to the SsuD family.

The enzyme catalyses an alkanesulfonate + FMNH2 + O2 = an aldehyde + FMN + sulfite + H2O + 2 H(+). Catalyzes the desulfonation of aliphatic sulfonates. This chain is Alkanesulfonate monooxygenase, found in Variovorax paradoxus (strain S110).